A 34-amino-acid polypeptide reads, in one-letter code: Mu-theraphotoxin-Pspp1 (34 aa).

3 disulfide bridges follow: cysteine 2–cysteine 17, cysteine 9–cysteine 22, and cysteine 16–cysteine 29. Phenylalanine 34 bears the Phenylalanine amide mark.

Belongs to the neurotoxin 10 (Hwtx-1) family. Expressed by the venom gland.

The protein resides in the secreted. In terms of biological role, voltage-gated sodium channel inhibitor. It is unclear if it selectively inhibits Nav1.7/SCN9A or shows similar potency on all sodium channels tested. According to Escoubas et al., 2006 and Nicolas et al., 2019, it is selective over Nav1.7/SCN9A (90% inhibition at 1 uM), versus Nav1.4 and Nav1.6 (35% inhibition), and shows a small inhibition on all other sodium channels (except Nav1.8/SCN10A). According to Goncalves et al., 2019, it shows a similar inhibition on almost all sodium channels tested (Nav1.1/SCN1A (IC(50)=280.3 nM), Nav1.2/SCN2A (IC(50)=73.7 nM), Nav1.3/SCN3A (IC(50)=201.5 nM), Nav1.4/SCN4A (IC(50)&gt;2100 nM), Nav1.5/SCN5A (IC(50)=710.6 nM), Nav1.6/SCN8A (IC(50)=491.2 nM), and Nav1.7/SCN9A (IC(50)=254.3-260 nM)), except Nav1.8/SCN10A. The voltage-dependence of steady-state Nav1.7/SCN9A channel activation and inactivation are not affected, suggesting that is does not act as a gating-modifier toxin but rather blocks or impedes ion flux through the channel pore. The toxin effect is partial and poorly reversible. In addition to its inhibition to sodium channels, it also shows a small inhibition on rat Kv3.4/KCNC4 potassium channels (20% inhibition at 1 uM). In vivo, when tested on pain models, it shows analgesic activity. The polypeptide is Mu-theraphotoxin-Pspp1 (Phlogiellus sp. (Tarantula)).